Here is a 315-residue protein sequence, read N- to C-terminus: MATTKLGNTKSASRAINYAEKRAEEKSGLNCDVDYAKSAFKQTRALYGKEDGIQAHTVIQSFKPGEVTPEQCNQLGLELAEKIAPNHQVAVYTHTDKDHYHNHIVINSVDLETGKKYQSNKKQRDLVKKENDNICREHGLSVTERGIAKMRYTQAEKGIVFDRDEYSWKDELRDLIENAKTHTSNLETFSEHLEEKGVGVKLRGETISYKPENENKWVRGRTLGSEYEKGAIDHEHERHQKQQREPEYADEFKINWDAVEQHTEQLKQRRVERAQETKQAHSKISSRDTRESENQRERAKGNNIRIERGDEGLSR.

Residues 263-315 are disordered; that stretch reads TEQLKQRRVERAQETKQAHSKISSRDTRESENQRERAKGNNIRIERGDEGLSR.

Functionally, this protein is probably required for relaxation complex formation and plasmid mobilization by conjugative plasmids. In Staphylococcus aureus, this protein is Protein rlx (rlx).